A 136-amino-acid polypeptide reads, in one-letter code: Fatty acid-binding protein homolog 5 (136 aa).

A fatty acid is bound by residues arginine 111 and 131-133 (RAY).

Belongs to the calycin superfamily. Fatty-acid binding protein (FABP) family.

The polypeptide is Fatty acid-binding protein homolog 5 (lbp-5) (Caenorhabditis elegans).